A 306-amino-acid chain; its full sequence is Tyrosine--tRNA ligase (306 aa).

Positions 32 and 36 each coordinate L-tyrosine. A 'HIGH' region motif is present at residues 37 to 45 (PSGKIHLGH). The interval 151–158 (YPIMQVND) is tyrosine. Gln-173 is a binding site for L-tyrosine. A 'KMSKS' region motif is present at residues 204–208 (KMSSS). Ser-207 is a binding site for ATP. 2 interaction with t-RNA regions span residues 228-231 (KAYC) and 283-288 (HPMDLK).

The protein belongs to the class-I aminoacyl-tRNA synthetase family. TyrS type 3 subfamily. In terms of assembly, homodimer.

It is found in the cytoplasm. It catalyses the reaction tRNA(Tyr) + L-tyrosine + ATP = L-tyrosyl-tRNA(Tyr) + AMP + diphosphate + H(+). In terms of biological role, catalyzes the attachment of tyrosine to tRNA(Tyr) in a two-step reaction: tyrosine is first activated by ATP to form Tyr-AMP and then transferred to the acceptor end of tRNA(Tyr). This is Tyrosine--tRNA ligase (tyrS) from Methanocaldococcus jannaschii (strain ATCC 43067 / DSM 2661 / JAL-1 / JCM 10045 / NBRC 100440) (Methanococcus jannaschii).